The following is a 420-amino-acid chain: Putative U-box domain-containing protein 58 (420 aa).

The 165-residue stretch at Asn-4–Asp-168 folds into the MIF4G domain. The stretch at Ser-139–Gln-352 forms a coiled coil. Residues Gln-352 to Val-420 enclose the U-box domain.

The catalysed reaction is S-ubiquitinyl-[E2 ubiquitin-conjugating enzyme]-L-cysteine + [acceptor protein]-L-lysine = [E2 ubiquitin-conjugating enzyme]-L-cysteine + N(6)-ubiquitinyl-[acceptor protein]-L-lysine.. It participates in protein modification; protein ubiquitination. Functions as an E3 ubiquitin ligase. In Arabidopsis thaliana (Mouse-ear cress), this protein is Putative U-box domain-containing protein 58 (PUB58).